We begin with the raw amino-acid sequence, 405 residues long: Arginine biosynthesis bifunctional protein ArgJ (405 aa).

6 residues coordinate substrate: Thr-152, Lys-178, Thr-189, Glu-276, Asn-400, and Ser-405. Thr-189 (nucleophile) is an active-site residue.

Belongs to the ArgJ family. Heterotetramer of two alpha and two beta chains.

The protein resides in the cytoplasm. It carries out the reaction N(2)-acetyl-L-ornithine + L-glutamate = N-acetyl-L-glutamate + L-ornithine. The catalysed reaction is L-glutamate + acetyl-CoA = N-acetyl-L-glutamate + CoA + H(+). Its pathway is amino-acid biosynthesis; L-arginine biosynthesis; L-ornithine and N-acetyl-L-glutamate from L-glutamate and N(2)-acetyl-L-ornithine (cyclic): step 1/1. The protein operates within amino-acid biosynthesis; L-arginine biosynthesis; N(2)-acetyl-L-ornithine from L-glutamate: step 1/4. Functionally, catalyzes two activities which are involved in the cyclic version of arginine biosynthesis: the synthesis of N-acetylglutamate from glutamate and acetyl-CoA as the acetyl donor, and of ornithine by transacetylation between N(2)-acetylornithine and glutamate. In Chromobacterium violaceum (strain ATCC 12472 / DSM 30191 / JCM 1249 / CCUG 213 / NBRC 12614 / NCIMB 9131 / NCTC 9757 / MK), this protein is Arginine biosynthesis bifunctional protein ArgJ.